Here is a 199-residue protein sequence, read N- to C-terminus: MLLPDLHPYTILLSIFIVLLLKQLVASIGKSTIKEFVWLVYLKVSSNQSIKTYNSKQHELHETNKEKRAISAQDEYAKWTKLNRQADKLSAELQKLNQEIQQQKASIDKVSNALLLVLTTLPIWVARVLYRNTHLFYIRQGIFPKYVEWVLALPFLPNGAVGLTIWMFAVNSVVSNFAFLVSFPFAKKVSKPVRDTKIE.

Residues 1 to 11 (MLLPDLHPYTI) lie on the Lumenal side of the membrane. Residues 12-31 (LLSIFIVLLLKQLVASIGKS) traverse the membrane as a helical segment. Residues 32–115 (TIKEFVWLVY…SIDKVSNALL (84 aa)) are Cytoplasmic-facing. The stretch at 66-116 (EKRAISAQDEYAKWTKLNRQADKLSAELQKLNQEIQQQKASIDKVSNALLL) forms a coiled coil. The chain crosses the membrane as a helical span at residues 116–136 (LVLTTLPIWVARVLYRNTHLF). The Lumenal segment spans residues 137 to 160 (YIRQGIFPKYVEWVLALPFLPNGA). The helical transmembrane segment at 161–177 (VGLTIWMFAVNSVVSNF) threads the bilayer. The Cytoplasmic segment spans residues 178–199 (AFLVSFPFAKKVSKPVRDTKIE).

It belongs to the WRB/GET1 family. Component of the Golgi to ER traffic (GET) complex, which is composed of GET1, GET2 and GET3. Within the complex, GET1 and GET2 form a heterotetramer which is stabilized by phosphatidylinositol binding and which binds to the GET3 homodimer.

Its subcellular location is the endoplasmic reticulum membrane. It is found in the golgi apparatus membrane. In terms of biological role, required for the post-translational delivery of tail-anchored (TA) proteins to the endoplasmic reticulum. Together with GET2, acts as a membrane receptor for soluble GET3, which recognizes and selectively binds the transmembrane domain of TA proteins in the cytosol. The GET complex cooperates with the HDEL receptor ERD2 to mediate the ATP-dependent retrieval of resident ER proteins that contain a C-terminal H-D-E-L retention signal from the Golgi to the ER. In Candida dubliniensis (strain CD36 / ATCC MYA-646 / CBS 7987 / NCPF 3949 / NRRL Y-17841) (Yeast), this protein is Golgi to ER traffic protein 1.